A 235-amino-acid chain; its full sequence is uncharacterized protein (235 aa).

The disordered stretch occupies residues 37-235 (QNAKLNDGDN…GGEDYPWPWN (199 aa)). Positions 72–89 (GSDDYSDVEDGGAEEGDS) are enriched in acidic residues. Over residues 112–124 (TSSTSTASTSSGS) the composition is skewed to low complexity. Residues 152–170 (RRPELDLSPKIENRSDSSS) show a composition bias toward basic and acidic residues. Polar residues predominate over residues 185 to 202 (NKDNPSRGQGNENPSASD).

Belongs to the herpesviridae BKRF4 family.

This is an uncharacterized protein from Alcelaphine herpesvirus 1 (strain C500) (AlHV-1).